Here is a 287-residue protein sequence, read N- to C-terminus: tRNA (guanine(9)-N1)-methyltransferase (287 aa).

The tract at residues 1–27 (MSDTSDLVDGKWQRLPPVPEGMSKSQW) is disordered. The SAM-dependent MTase TRM10-type domain maps to 79-272 (EPRVNRDQVA…SVIPSRKLDP (194 aa)). S-adenosyl-L-methionine-binding positions include 179 to 180 (LT), Gly-199, 203 to 207 (DKNRH), Cys-211, Leu-225, and 237 to 239 (KVL). Asp-203 serves as the catalytic Proton acceptor. The segment covering 268–278 (RKLDPVKEKEQ) has biased composition (basic and acidic residues). Positions 268–287 (RKLDPVKEKEQQQQQQQQQQ) are disordered.

This sequence belongs to the class IV-like SAM-binding methyltransferase superfamily. TRM10 family. In terms of assembly, monomer.

It localises to the cytoplasm. Its subcellular location is the nucleus. It carries out the reaction guanosine(9) in tRNA + S-adenosyl-L-methionine = N(1)-methylguanosine(9) in tRNA + S-adenosyl-L-homocysteine + H(+). Its function is as follows. S-adenosyl-L-methionine-dependent guanine N(1)-methyltransferase that catalyzes the formation of N(1)-methylguanine at position 9 (m1G9) in cytoplasmic tRNA. The sequence is that of tRNA (guanine(9)-N1)-methyltransferase from Candida glabrata (strain ATCC 2001 / BCRC 20586 / JCM 3761 / NBRC 0622 / NRRL Y-65 / CBS 138) (Yeast).